The following is a 242-amino-acid chain: Small ribosomal subunit protein uS2 (242 aa).

Belongs to the universal ribosomal protein uS2 family.

The sequence is that of Small ribosomal subunit protein uS2 from Aliivibrio fischeri (strain ATCC 700601 / ES114) (Vibrio fischeri).